A 306-amino-acid chain; its full sequence is Foldase protein PrsA (306 aa).

The first 20 residues, methionine 1–serine 20, serve as a signal peptide directing secretion. Cysteine 21 carries N-palmitoyl cysteine lipidation. Residue cysteine 21 is the site of S-diacylglycerol cysteine attachment. Residues phenylalanine 165–glycine 255 form the PpiC domain.

It belongs to the PrsA family.

The protein resides in the cell membrane. The enzyme catalyses [protein]-peptidylproline (omega=180) = [protein]-peptidylproline (omega=0). In terms of biological role, plays a major role in protein secretion by helping the post-translocational extracellular folding of several secreted proteins. The chain is Foldase protein PrsA from Caldanaerobacter subterraneus subsp. tengcongensis (strain DSM 15242 / JCM 11007 / NBRC 100824 / MB4) (Thermoanaerobacter tengcongensis).